A 58-amino-acid chain; its full sequence is Potassium channel toxin alpha-KTx 16.6 (58 aa).

Residues 1–22 form the signal peptide; the sequence is MKILSVLLIALIICSINICSEA. 3 cysteine pairs are disulfide-bonded: Cys29/Cys50, Cys35/Cys55, and Cys39/Cys57.

It belongs to the short scorpion toxin superfamily. Potassium channel inhibitor family. Alpha-KTx 16 subfamily. In terms of tissue distribution, expressed by the venom gland.

Its subcellular location is the secreted. In terms of biological role, inhibits potassium channel. The chain is Potassium channel toxin alpha-KTx 16.6 from Buthus israelis (Israeli scorpion).